Consider the following 408-residue polypeptide: Tripartite motif containing 13 (408 aa).

An RING-type zinc finger spans residues 10-58 (CPICCSLFDDPRVLPCSHNFCKKCLDGVLEENSRTMQWRPSSFKCPTCR). A B box-type zinc finger spans residues 89 to 131 (PKMPVCKEHSDQPLNIFCSTDLKLICGSCATTGEHKKHVFSSI). Residues C94, H97, C117, and H123 each contribute to the Zn(2+) site. Residues 322 to 342 (ILVVACLILLLVTFLCAYPFI) traverse the membrane as a helical segment.

It is found in the endoplasmic reticulum membrane. Its pathway is protein modification; protein ubiquitination. E3 ubiquitin ligase involved in the retrotranslocation and turnover of membrane and secretory proteins from the ER through a set of processes named ER-associated degradation (ERAD). This process acts on misfolded proteins as well as in the regulated degradation of correctly folded proteins. The sequence is that of Tripartite motif containing 13 (trim13) from Xenopus tropicalis (Western clawed frog).